Consider the following 262-residue polypeptide: Putative hydro-lyase cu1581 (262 aa).

Belongs to the D-glutamate cyclase family.

This is Putative hydro-lyase cu1581 from Corynebacterium urealyticum (strain ATCC 43042 / DSM 7109).